The primary structure comprises 336 residues: Glycerol-3-phosphate dehydrogenase [NAD(P)+] (336 aa).

NADPH is bound by residues Ser-16, Tyr-17, His-37, and Lys-111. Lys-111, Gly-140, and Thr-142 together coordinate sn-glycerol 3-phosphate. Ala-144 is a binding site for NADPH. The sn-glycerol 3-phosphate site is built by Lys-196, Asp-249, Ser-259, Arg-260, and Asn-261. The active-site Proton acceptor is Lys-196. NADPH is bound at residue Arg-260. The NADPH site is built by Val-284 and Glu-286.

It belongs to the NAD-dependent glycerol-3-phosphate dehydrogenase family.

Its subcellular location is the cytoplasm. It catalyses the reaction sn-glycerol 3-phosphate + NAD(+) = dihydroxyacetone phosphate + NADH + H(+). It carries out the reaction sn-glycerol 3-phosphate + NADP(+) = dihydroxyacetone phosphate + NADPH + H(+). It participates in membrane lipid metabolism; glycerophospholipid metabolism. Its function is as follows. Catalyzes the reduction of the glycolytic intermediate dihydroxyacetone phosphate (DHAP) to sn-glycerol 3-phosphate (G3P), the key precursor for phospholipid synthesis. The protein is Glycerol-3-phosphate dehydrogenase [NAD(P)+] of Actinobacillus pleuropneumoniae serotype 3 (strain JL03).